The primary structure comprises 292 residues: Protease HtpX (292 aa).

2 consecutive transmembrane segments (helical) span residues 5–25 (VVLFLLTNFAVLILAGIVMSV) and 35–55 (GLLVMAAIFGFGGSFISLLLS). His140 lines the Zn(2+) pocket. Glu141 is a catalytic residue. His144 provides a ligand contact to Zn(2+). The next 2 membrane-spanning stretches (helical) occupy residues 155-175 (LLQGVLNTFVIVLARVVGGII) and 193-213 (IIVFVLEMVFGLFATMIAMWF). Position 218 (Glu218) interacts with Zn(2+).

It belongs to the peptidase M48B family. Requires Zn(2+) as cofactor.

The protein resides in the cell inner membrane. This chain is Protease HtpX, found in Xanthomonas campestris pv. campestris (strain 8004).